Reading from the N-terminus, the 425-residue chain is Enolase (425 aa).

Q163 provides a ligand contact to (2R)-2-phosphoglycerate. The active-site Proton donor is the E205. 3 residues coordinate Mg(2+): D242, E285, and D312. The (2R)-2-phosphoglycerate site is built by K337, R366, S367, and K388. The active-site Proton acceptor is the K337.

This sequence belongs to the enolase family. The cofactor is Mg(2+).

Its subcellular location is the cytoplasm. It localises to the secreted. The protein localises to the cell surface. The enzyme catalyses (2R)-2-phosphoglycerate = phosphoenolpyruvate + H2O. The protein operates within carbohydrate degradation; glycolysis; pyruvate from D-glyceraldehyde 3-phosphate: step 4/5. Catalyzes the reversible conversion of 2-phosphoglycerate (2-PG) into phosphoenolpyruvate (PEP). It is essential for the degradation of carbohydrates via glycolysis. The protein is Enolase of Cereibacter sphaeroides (strain ATCC 17029 / ATH 2.4.9) (Rhodobacter sphaeroides).